The sequence spans 747 residues: Polyribonucleotide nucleotidyltransferase (747 aa).

The Mg(2+) site is built by Asp-487 and Asp-493. The region spanning 554–613 (PSTTTIKIDKDKIRDIIGPGGKIIKEICETSGAKIDISDDGTVSVYAADRDKLKIASDKI) is the KH domain. The 69-residue stretch at 623–691 (GEIFNGTVTK…NKGKAKLTIK (69 aa)) folds into the S1 motif domain. The interval 694–716 (DKDKSLNNPKPQNSINNAKENSE) is disordered. The segment covering 699–712 (LNNPKPQNSINNAK) has biased composition (polar residues).

This sequence belongs to the polyribonucleotide nucleotidyltransferase family. It depends on Mg(2+) as a cofactor.

The protein localises to the cytoplasm. The enzyme catalyses RNA(n+1) + phosphate = RNA(n) + a ribonucleoside 5'-diphosphate. Involved in mRNA degradation. Catalyzes the phosphorolysis of single-stranded polyribonucleotides processively in the 3'- to 5'-direction. The protein is Polyribonucleotide nucleotidyltransferase of Rickettsia canadensis (strain McKiel).